A 56-amino-acid chain; its full sequence is Ovomucoid (56 aa).

The region spanning 6–56 is the Kazal-like domain; sequence VDCSEYPKPACTLEYRPLCGSDNKTYGNKCNFCNAVVESNGTLTLSHFGKC. 3 cysteine pairs are disulfide-bonded: Cys8–Cys38, Cys16–Cys35, and Cys24–Cys56. Residue Asn45 is glycosylated (N-linked (GlcNAc...) asparagine).

The protein resides in the secreted. This is Ovomucoid from Meleagris ocellata (Ocellated turkey).